A 176-amino-acid chain; its full sequence is ATP-dependent protease subunit HslV (176 aa).

Residue T2 is part of the active site. Na(+)-binding residues include G157, C160, and T163.

The protein belongs to the peptidase T1B family. HslV subfamily. In terms of assembly, a double ring-shaped homohexamer of HslV is capped on each side by a ring-shaped HslU homohexamer. The assembly of the HslU/HslV complex is dependent on binding of ATP.

It is found in the cytoplasm. It carries out the reaction ATP-dependent cleavage of peptide bonds with broad specificity.. Its activity is regulated as follows. Allosterically activated by HslU binding. Its function is as follows. Protease subunit of a proteasome-like degradation complex believed to be a general protein degrading machinery. This chain is ATP-dependent protease subunit HslV, found in Photorhabdus laumondii subsp. laumondii (strain DSM 15139 / CIP 105565 / TT01) (Photorhabdus luminescens subsp. laumondii).